We begin with the raw amino-acid sequence, 60 residues long: Mastoparan-VB1 (60 aa).

Residues 1 to 23 (MKNTILLLFTAFIFLSGFFGMSA) form the signal peptide. The propeptide occupies 24 to 45 (EALADPKADPLAGPFPDADPDP). AXPX repeat units follow at residues 27–30 (ADPK), 31–34 (ADPL), 35–38 (AGPF), and 40–43 (DADP). Leucine 59 bears the Leucine amide mark.

In terms of tissue distribution, expressed by the venom gland.

It is found in the secreted. The protein resides in the target cell membrane. In terms of biological role, antimicrobial peptide. Shows activity against both Gram-positive (S.aureus MIC=1.9-3.75 ug/ml) and -negative (E.coli MIC=15-60 ug/ml) bacteria, as well against fungi (C.albicans MIC=15 ug/ml). Also promotes moderate mast cell degranulation. Does not show hemolytic activity on rabbit and human erythrocytes. Its mast cell degranulation activity may be related to the activation of G-protein coupled receptors in mast cells as well as interaction with other proteins located in cell endosomal membranes in the mast cells. This Vespa bicolor (Black shield wasp) protein is Mastoparan-VB1.